The following is a 232-amino-acid chain: Protein shisa-3 (232 aa).

The N-terminal stretch at 1–19 (MRLLGCFFLIFLTWGSARA) is a signal peptide. At 20-93 (QGEYCHGWLD…GVSAQPVYVP (74 aa)) the chain is on the lumenal side. Residues 94-114 (FLIVGSIFIAFIIVGSLVAVY) form a helical membrane-spanning segment. Residues 115-232 (CCTCLRPKQT…NKSCPDFRQS (118 aa)) are Cytoplasmic-facing. The disordered stretch occupies residues 146-185 (TSGNLRTPSRQSSTATSSTSTGGSVRRLSSSRADPGYLVS). Residues 151–177 (RTPSRQSSTATSSTSTGGSVRRLSSSR) show a composition bias toward low complexity.

Belongs to the shisa family. In terms of assembly, interacts with fzd8 and fgfr1.

The protein localises to the endoplasmic reticulum membrane. Its function is as follows. Plays an essential role in the maturation of presomitic mesoderm cells by individual attenuation of both fgf and wnt signaling. Regulates head and somite developmen. Inhibits both wnt and fgf signaling through the regulation of protein maturation and cell surface transportation of their receptors within the endoplasmic reticulum. The polypeptide is Protein shisa-3 (shisa3) (Xenopus laevis (African clawed frog)).